Consider the following 299-residue polypeptide: Glutamyl-Q tRNA(Asp) synthetase (299 aa).

L-glutamate contacts are provided by residues 9–13 and Glu-45; that span reads RFAPS. Residues 12 to 22 carry the 'HIGH' region motif; it reads PSPTGPLHFGS. 3 residues coordinate Zn(2+): Cys-101, Cys-103, and Cys-118. The L-glutamate site is built by Tyr-170 and Arg-188. Residues 226 to 230 carry the 'KMSKS' region motif; that stretch reads KLSKS. Residue Lys-229 coordinates ATP. The tract at residues 279–299 is disordered; sequence QLLPRQRQRDRATCAYERQRD. The span at 285 to 299 shows a compositional bias: basic and acidic residues; that stretch reads RQRDRATCAYERQRD.

This sequence belongs to the class-I aminoacyl-tRNA synthetase family. GluQ subfamily. Zn(2+) is required as a cofactor.

In terms of biological role, catalyzes the tRNA-independent activation of glutamate in presence of ATP and the subsequent transfer of glutamate onto a tRNA(Asp). Glutamate is transferred on the 2-amino-5-(4,5-dihydroxy-2-cyclopenten-1-yl) moiety of the queuosine in the wobble position of the QUC anticodon. The polypeptide is Glutamyl-Q tRNA(Asp) synthetase (Xanthomonas oryzae pv. oryzae (strain KACC10331 / KXO85)).